Reading from the N-terminus, the 199-residue chain is Putative peroxiredoxin ycf42 (199 aa).

A Thioredoxin domain is found at 8 to 165; that stretch reads LQVGQIAPDF…TLRVLQAIQY (158 aa). C53 serves as the catalytic Cysteine sulfenic acid (-SOH) intermediate.

The protein belongs to the peroxiredoxin family. AhpC/Prx1 subfamily. Homodimer; disulfide-linked, upon oxidation. The Cys-53-SH group is the primary site of oxidation by H(2)O(2), and the oxidized Cys-53 (probably Cys-SOH) rapidly reacts with Cys-174-SH of the other subunit to form an intermolecular disulfide. This disulfide is subsequently reduced by thioredoxin.

The protein localises to the plastid. Its subcellular location is the chloroplast. It catalyses the reaction a hydroperoxide + [thioredoxin]-dithiol = an alcohol + [thioredoxin]-disulfide + H2O. Its function is as follows. Thiol-specific peroxidase that catalyzes the reduction of hydrogen peroxide and organic hydroperoxides to water and alcohols, respectively. Plays a role in cell protection against oxidative stress by detoxifying peroxides. The protein is Putative peroxiredoxin ycf42 (ycf42) of Porphyra purpurea (Red seaweed).